The sequence spans 177 residues: ATP synthase subunit delta 1 (177 aa).

Belongs to the ATPase delta chain family. In terms of assembly, F-type ATPases have 2 components, F(1) - the catalytic core - and F(0) - the membrane proton channel. F(1) has five subunits: alpha(3), beta(3), gamma(1), delta(1), epsilon(1). F(0) has three main subunits: a(1), b(2) and c(10-14). The alpha and beta chains form an alternating ring which encloses part of the gamma chain. F(1) is attached to F(0) by a central stalk formed by the gamma and epsilon chains, while a peripheral stalk is formed by the delta and b chains.

It is found in the cell inner membrane. Functionally, f(1)F(0) ATP synthase produces ATP from ADP in the presence of a proton or sodium gradient. F-type ATPases consist of two structural domains, F(1) containing the extramembraneous catalytic core and F(0) containing the membrane proton channel, linked together by a central stalk and a peripheral stalk. During catalysis, ATP synthesis in the catalytic domain of F(1) is coupled via a rotary mechanism of the central stalk subunits to proton translocation. This protein is part of the stalk that links CF(0) to CF(1). It either transmits conformational changes from CF(0) to CF(1) or is implicated in proton conduction. In Photobacterium profundum (strain SS9), this protein is ATP synthase subunit delta 1.